Consider the following 323-residue polypeptide: Putative gluconeogenesis factor (323 aa).

This sequence belongs to the gluconeogenesis factor family.

It localises to the cytoplasm. Functionally, required for morphogenesis under gluconeogenic growth conditions. This is Putative gluconeogenesis factor from Thermoanaerobacterium thermosulfurigenes (Clostridium thermosulfurogenes).